The sequence spans 369 residues: Anhydro-N-acetylmuramic acid kinase (369 aa).

Glycine 12–aspartate 19 contacts ATP.

Belongs to the anhydro-N-acetylmuramic acid kinase family.

The enzyme catalyses 1,6-anhydro-N-acetyl-beta-muramate + ATP + H2O = N-acetyl-D-muramate 6-phosphate + ADP + H(+). The protein operates within amino-sugar metabolism; 1,6-anhydro-N-acetylmuramate degradation. Its pathway is cell wall biogenesis; peptidoglycan recycling. Its function is as follows. Catalyzes the specific phosphorylation of 1,6-anhydro-N-acetylmuramic acid (anhMurNAc) with the simultaneous cleavage of the 1,6-anhydro ring, generating MurNAc-6-P. Is required for the utilization of anhMurNAc either imported from the medium or derived from its own cell wall murein, and thus plays a role in cell wall recycling. This is Anhydro-N-acetylmuramic acid kinase from Shewanella woodyi (strain ATCC 51908 / MS32).